A 615-amino-acid chain; its full sequence is tRNA uridine 5-carboxymethylaminomethyl modification enzyme MnmG (615 aa).

11–16 lines the FAD pocket; that stretch reads GLGHAG. 278-292 lines the NAD(+) pocket; that stretch reads GPRYCPSLEDKVVRF.

The protein belongs to the MnmG family. Homodimer. Heterotetramer of two MnmE and two MnmG subunits. Requires FAD as cofactor.

The protein resides in the cytoplasm. NAD-binding protein involved in the addition of a carboxymethylaminomethyl (cmnm) group at the wobble position (U34) of certain tRNAs, forming tRNA-cmnm(5)s(2)U34. This Myxococcus xanthus (strain DK1622) protein is tRNA uridine 5-carboxymethylaminomethyl modification enzyme MnmG.